Here is a 528-residue protein sequence, read N- to C-terminus: Low affinity inorganic phosphate transporter 4 (528 aa).

Residues 1–18 lie on the Cytoplasmic side of the membrane; it reads MALEVLEALDSARTQWYH. A helical membrane pass occupies residues 19-39; sequence VTAIVIAGMGFFTDAYDLFCI. Topologically, residues 40–68 are extracellular; the sequence is TTVSKLLGRLYYFDPSTGKPGKLPNNVNN. A helical transmembrane segment spans residues 69–89; it reads LVTGVALVGTLSGQLFFGYLG. Over 90 to 96 the chain is Cytoplasmic; that stretch reads DKLGRKK. A helical transmembrane segment spans residues 97–117; it reads VYGVTLILMVACAICSGLSFG. The Extracellular portion of the chain corresponds to 118–122; the sequence is ASAKS. Residues 123-143 form a helical membrane-spanning segment; that stretch reads VMGTLCFFRFWLGFGIGGDYP. Residues 144–158 lie on the Cytoplasmic side of the membrane; sequence LSATIMSEYANKRTR. The chain crosses the membrane as a helical span at residues 159-179; that stretch reads GAFIAAVFAMQGVGIIFAGLV. At 180 to 208 the chain is on the extracellular side; that stretch reads SMCLSAGFKASYHAPSFHDDPIMSTQPQG. A helical membrane pass occupies residues 209-229; the sequence is DLMWRLVLMIGAVPAAMTYYW. Residues 230–292 are Cytoplasmic-facing; the sequence is RMKMPETGRY…NEFFTRHGRH (63 aa). A helical membrane pass occupies residues 293–313; it reads LIGTMTSWFLLDIAFYSQNLT. Over 314–341 the chain is Extracellular; the sequence is QKDIFPAMGLIDKDFEMNAIQEVFETSR. Residues 342–362 form a helical membrane-spanning segment; the sequence is AMFVIALFGTFPGYWFTVFFI. Residues 363-371 are Cytoplasmic-facing; the sequence is EKLGRYKIQ. A helical transmembrane segment spans residues 372 to 392; that stretch reads LIGFFMMSVFMFIIGVKYDYL. Over 393–401 the chain is Extracellular; sequence RNENSHMFA. The chain crosses the membrane as a helical span at residues 402-422; the sequence is LLYGLTFFFANFGPNSTTFVL. Residues 423 to 433 are Cytoplasmic-facing; the sequence is PAELFPTRVRS. A helical transmembrane segment spans residues 434–454; that stretch reads TCHALSAAAGKAGAMVGAFGI. Topologically, residues 455-467 are extracellular; the sequence is QNYTQKGEQKQIK. A glycan (N-linked (GlcNAc...) asparagine) is linked at asparagine 456. Residues 468–488 traverse the membrane as a helical segment; sequence HAMMILAVTNLIGFFCSFLVT. At 489 to 528 the chain is on the cytoplasmic side; that stretch reads ETKGRSLEEISGEDGRESELTPTPPNNRVPTRQEPRSETM. 2 stretches are compositionally biased toward basic and acidic residues: residues 496–507 and 519–528; these read EEISGEDGRESE and TRQEPRSETM. The interval 496 to 528 is disordered; sequence EEISGEDGRESELTPTPPNNRVPTRQEPRSETM.

The protein belongs to the major facilitator superfamily. Phosphate:H(+) symporter (TC 2.A.1.9) family. As to expression, expressed only in mycorrhizal roots, exclusively in cortical cells containing arbuscules, upon arbuscular mycorrhizal (AM) symbiosis with AM fungi (e.g. Gigaspora margarita and Funnelliformis mosseae). Also observed in root tips of non-mycorrhizal roots, in a phosphate (Pi) depended-manner, highest expression levels being observed in low Pi conditions.

The protein localises to the cell membrane. It catalyses the reaction phosphate(in) + H(+)(in) = phosphate(out) + H(+)(out). Its function is as follows. Low-affinity transporter for external inorganic phosphate (Pi) probably involved in the acquisition of phosphate released by arbuscular mycorrhizal (AM) fungi (e.g. Gigaspora margarita and Funnelliformis mosseae) during AM symbiosis; required for propper mycorrhizal arbuscule morphology. Acts as a Pi-sensing machinery at the root tip level, independently of AM fungi, involved in the regulation of early root branching and lateral roots formation. This chain is Low affinity inorganic phosphate transporter 4, found in Lotus japonicus (Lotus corniculatus var. japonicus).